The following is a 335-amino-acid chain: UPF0104 membrane protein PH1989 (335 aa).

Transmembrane regions (helical) follow at residues 4 to 24, 34 to 54, 62 to 82, 122 to 142, 148 to 168, 231 to 251, 266 to 286, and 304 to 324; these read YLLI…AGIE, DIRF…IWAV, GANI…GIFL, ILDV…ALTI, LIIL…TTVF, LYSF…FLSL, ASIA…TEVV, and VTML…GILV.

It belongs to the UPF0104 family.

The protein resides in the cell membrane. In Pyrococcus horikoshii (strain ATCC 700860 / DSM 12428 / JCM 9974 / NBRC 100139 / OT-3), this protein is UPF0104 membrane protein PH1989.